An 89-amino-acid polypeptide reads, in one-letter code: Small ribosomal subunit protein uS15 (89 aa).

It belongs to the universal ribosomal protein uS15 family. Part of the 30S ribosomal subunit. Forms a bridge to the 50S subunit in the 70S ribosome, contacting the 23S rRNA.

In terms of biological role, one of the primary rRNA binding proteins, it binds directly to 16S rRNA where it helps nucleate assembly of the platform of the 30S subunit by binding and bridging several RNA helices of the 16S rRNA. Forms an intersubunit bridge (bridge B4) with the 23S rRNA of the 50S subunit in the ribosome. This chain is Small ribosomal subunit protein uS15, found in Salmonella schwarzengrund (strain CVM19633).